Reading from the N-terminus, the 381-residue chain is Probable tRNA sulfurtransferase (381 aa).

The THUMP domain maps to 57–160; sequence EKGIEKLKSV…NKAYVYSKKI (104 aa). ATP contacts are provided by residues 177-178, 202-203, Arg259, Gly281, and Gln290; these read ML and YF.

This sequence belongs to the ThiI family.

It is found in the cytoplasm. The catalysed reaction is [ThiI sulfur-carrier protein]-S-sulfanyl-L-cysteine + a uridine in tRNA + 2 reduced [2Fe-2S]-[ferredoxin] + ATP + H(+) = [ThiI sulfur-carrier protein]-L-cysteine + a 4-thiouridine in tRNA + 2 oxidized [2Fe-2S]-[ferredoxin] + AMP + diphosphate. The enzyme catalyses [ThiS sulfur-carrier protein]-C-terminal Gly-Gly-AMP + S-sulfanyl-L-cysteinyl-[cysteine desulfurase] + AH2 = [ThiS sulfur-carrier protein]-C-terminal-Gly-aminoethanethioate + L-cysteinyl-[cysteine desulfurase] + A + AMP + 2 H(+). It functions in the pathway cofactor biosynthesis; thiamine diphosphate biosynthesis. Catalyzes the ATP-dependent transfer of a sulfur to tRNA to produce 4-thiouridine in position 8 of tRNAs, which functions as a near-UV photosensor. Also catalyzes the transfer of sulfur to the sulfur carrier protein ThiS, forming ThiS-thiocarboxylate. This is a step in the synthesis of thiazole, in the thiamine biosynthesis pathway. The sulfur is donated as persulfide by IscS. This chain is Probable tRNA sulfurtransferase, found in Clostridium kluyveri (strain NBRC 12016).